The chain runs to 578 residues: Zinc finger-containing ubiquitin peptidase 1 (578 aa).

The C2H2-type 1 zinc finger occupies 2–24; that stretch reads LSCDICGETVTSEPDMKAHLIVH. Residues 29–52 form a C2H2-type 2; atypical zinc finger; it reads IVCPFCKLSGVSYDEMCFHIETAH. 2 consecutive C2H2-type zinc fingers follow at residues 154–177 and 193–215; these read PECPFCGKIEEHSEDMETHVKTTH and YDCPMCGLICTNYHILQEHVDLH. The interval 226-248 is MIU; that stretch reads DRVQCSGDLQLAHQLQQEEDRKR. The tract at residues 249-274 is zUBD/ZHA; that stretch reads RSEESRQEIEEFQKLQRQYGLDNSGG. K262 carries the N6-acetyllysine modification. The active-site Nucleophile is the C360. H491 (proton acceptor) is an active-site residue. The active site involves D512.

The protein belongs to the peptidase C78 family. ZUFSP subfamily. In terms of assembly, interacts with RPA1 and RPA2.

It localises to the cytoplasm. Its subcellular location is the nucleus. It carries out the reaction Thiol-dependent hydrolysis of ester, thioester, amide, peptide and isopeptide bonds formed by the C-terminal Gly of ubiquitin (a 76-residue protein attached to proteins as an intracellular targeting signal).. Functionally, deubiquitinase with endodeubiquitinase activity that specifically interacts with and cleaves 'Lys-63'-linked long polyubiquitin chains. Shows only weak activity against 'Lys-11' and 'Lys-48'-linked chains. Plays an important role in genome stability pathways, functioning to prevent spontaneous DNA damage and also promote cellular survival in response to exogenous DNA damage. Modulates the ubiquitination status of replication protein A (RPA) complex proteins in response to replication stress. This Macaca fascicularis (Crab-eating macaque) protein is Zinc finger-containing ubiquitin peptidase 1.